A 147-amino-acid chain; its full sequence is Large ribosomal subunit protein uL13 (147 aa).

This sequence belongs to the universal ribosomal protein uL13 family. In terms of assembly, part of the 50S ribosomal subunit.

In terms of biological role, this protein is one of the early assembly proteins of the 50S ribosomal subunit, although it is not seen to bind rRNA by itself. It is important during the early stages of 50S assembly. The protein is Large ribosomal subunit protein uL13 of Paenarthrobacter aurescens (strain TC1).